The primary structure comprises 100 residues: Urease subunit gamma (100 aa).

Belongs to the urease gamma subunit family. Heterotrimer of UreA (gamma), UreB (beta) and UreC (alpha) subunits. Three heterotrimers associate to form the active enzyme.

The protein localises to the cytoplasm. The catalysed reaction is urea + 2 H2O + H(+) = hydrogencarbonate + 2 NH4(+). It functions in the pathway nitrogen metabolism; urea degradation; CO(2) and NH(3) from urea (urease route): step 1/1. This Chelativorans sp. (strain BNC1) protein is Urease subunit gamma.